Here is a 409-residue protein sequence, read N- to C-terminus: Argininosuccinate synthase (409 aa).

ATP is bound by residues alanine 8–serine 16 and alanine 34. Tyrosine 85 contacts L-citrulline. ATP is bound at residue glycine 115. Residues threonine 117, asparagine 121, and aspartate 122 each contribute to the L-aspartate site. L-citrulline is bound at residue asparagine 121. Residues arginine 125, serine 178, serine 187, glutamate 268, and tyrosine 280 each contribute to the L-citrulline site.

The protein belongs to the argininosuccinate synthase family. Type 1 subfamily. As to quaternary structure, homotetramer.

Its subcellular location is the cytoplasm. The catalysed reaction is L-citrulline + L-aspartate + ATP = 2-(N(omega)-L-arginino)succinate + AMP + diphosphate + H(+). It participates in amino-acid biosynthesis; L-arginine biosynthesis; L-arginine from L-ornithine and carbamoyl phosphate: step 2/3. This Thermotoga sp. (strain RQ2) protein is Argininosuccinate synthase.